A 409-amino-acid chain; its full sequence is Alpha-1-antitrypsin (409 aa).

An N-terminal signal peptide occupies residues 1–15 (LLLAGLCCLLPGSLA). The interval 18–39 (PQGDAAQKTDTPPHDQNHPTLN) is disordered. 4 N-linked (GlcNAc...) asparagine glycosylation sites follow: N61, N98, N136, and N262. The tract at residues 364–383 (GAMFLEAIPMSIPPEVKFNK) is RCL. A Phosphoserine modification is found at S374.

The protein belongs to the serpin family. As to quaternary structure, interacts with CELA2A. Interacts with ERGIC3 and LMAN1/ERGIC53. Interacts with PRSS1/Trypsin. As to expression, plasma.

Its subcellular location is the secreted. Inhibitor of serine proteases. Its primary target is elastase, but it also has a moderate affinity for plasmin and thrombin. Inhibits trypsin, chymotrypsin and plasminogen activator. The protein is Alpha-1-antitrypsin (SERPINA1) of Papio anubis (Olive baboon).